We begin with the raw amino-acid sequence, 486 residues long: Adenylate kinase 8 (486 aa).

Adenylate kinase regions lie at residues 58 to 258 (PRII…NFIC) and 269 to 471 (PRIL…SRLV). Residue 67–72 (ASGKKT) coordinates ATP. Positions 87–112 (TFCDILKDDSDLTRAAQSYYDKKQNV) are NMP 1. AMP is bound by residues 139-142 (AIPK) and R202. Positions 176 to 205 (GKRIDPVTGDVYHVTFMWPESEEVAQRLET) are LID 1. 278-283 (GAGRNL) provides a ligand contact to ATP. The NMP 2 stretch occupies residues 298–327 (CCGELLKAVSADESHMGELIKPYLESEQQV). Residues 325–327 (QQV) and 354–357 (GFPR) each bind AMP. Positions 391 to 424 (LRAVDPVTGEWYHSVYKPPPGPEVQARLRFNPQH) are LID 2. R392 contributes to the ATP binding site. R432 serves as a coordination point for AMP.

The protein belongs to the adenylate kinase family.

The protein localises to the cytoplasm. The protein resides in the cytosol. The enzyme catalyses AMP + ATP = 2 ADP. It catalyses the reaction a 2'-deoxyribonucleoside 5'-diphosphate + ATP = a 2'-deoxyribonucleoside 5'-triphosphate + ADP. It carries out the reaction a ribonucleoside 5'-diphosphate + ATP = a ribonucleoside 5'-triphosphate + ADP. Its function is as follows. Nucleoside monophosphate (NMP) kinase that catalyzes the reversible transfer of the terminal phosphate group between nucleoside triphosphates and monophosphates. Has highest activity toward AMP, and weaker activity toward dAMP, CMP and dCMP. Also displays broad nucleoside diphosphate kinase activity. The chain is Adenylate kinase 8 (ak8) from Danio rerio (Zebrafish).